Here is a 256-residue protein sequence, read N- to C-terminus: PGL/p-HBAD biosynthesis glycosyltransferase Mb2981 (256 aa).

Belongs to the glycosyltransferase 2 family.

Its function is as follows. Involved in glycosylation steps downstream of mono-O-methyl-glycosyl-p-hydroxybenzoic acid derivative (p-HBAD I) and 2-O-methyl-rhamnosyl-phenolphthiocerol dimycocerosate (mycoside B) during the p-hydroxybenzoic acid derivatives (p-HBAD) and glycosylated phenolphthiocerol dimycocerosates (PGL) biosynthesis. The sequence is that of PGL/p-HBAD biosynthesis glycosyltransferase Mb2981 from Mycobacterium bovis (strain ATCC BAA-935 / AF2122/97).